Here is a 433-residue protein sequence, read N- to C-terminus: MVNELTILIKNTTVLDLNKFAAVENDILIEGNKISKIGVDIEVNDKENLKIIDGSNKVALPGLINGHTHVAMTLFRGASDDLPLMDWLNNVIWPSESRLTGEDVYWGSLLGIVEMIKSGTTTFCDMYFFMDEVAHAVEQSGIRAILSRGMVALDPENGEKGLKESIDFIEKWQGKANGRITTALAPHAPYTCPPEFLKDVIWEAKRLNVPINIHISETLDEISIIKERYGTTPVRHLESLGLFEVKTIGAHLVHVDDEEIQILKRYQVGAIHNPQSNMKLASGIAPVAKMLEAGVLVGLGTDGAASNNDLDMIEELRAASYLQKVSSMNPEALNAKTSIAMATSLGARALGLTEVGLLKEGYKADIILLNTNETNFYPRHNIFNLIAYSAKGADVDTVIVDGEIIMEKRQLTRLDEEKIKFEANKRGLKLVAG.

2 residues coordinate Zn(2+): histidine 67 and histidine 69. Residues glutamate 96, arginine 148, and histidine 187 each coordinate substrate. Residue histidine 214 coordinates Zn(2+). Glutamate 217 and aspartate 302 together coordinate substrate. Aspartate 302 lines the Zn(2+) pocket.

It belongs to the metallo-dependent hydrolases superfamily. MTA/SAH deaminase family. Requires Zn(2+) as cofactor.

It carries out the reaction S-adenosyl-L-homocysteine + H2O + H(+) = S-inosyl-L-homocysteine + NH4(+). It catalyses the reaction S-methyl-5'-thioadenosine + H2O + H(+) = S-methyl-5'-thioinosine + NH4(+). Its function is as follows. Catalyzes the deamination of 5-methylthioadenosine and S-adenosyl-L-homocysteine into 5-methylthioinosine and S-inosyl-L-homocysteine, respectively. Is also able to deaminate adenosine. The protein is 5-methylthioadenosine/S-adenosylhomocysteine deaminase of Carboxydothermus hydrogenoformans (strain ATCC BAA-161 / DSM 6008 / Z-2901).